The following is a 127-amino-acid chain: uncharacterized protein (127 aa).

Residues 12–32 (FFFLILFYFCIISSFLFLFIF) traverse the membrane as a helical segment.

The protein resides in the membrane. This is an uncharacterized protein from Saccharomyces cerevisiae (strain ATCC 204508 / S288c) (Baker's yeast).